Here is a 134-residue protein sequence, read N- to C-terminus: Profilin-2 (134 aa).

Cys13 and Cys118 are joined by a disulfide. Residues 84-100 (AVIRGKKGSGGITIKKT) carry the Involved in PIP2 interaction motif. Thr114 carries the phosphothreonine modification.

This sequence belongs to the profilin family. As to quaternary structure, occurs in many kinds of cells as a complex with monomeric actin in a 1:1 ratio. In terms of processing, phosphorylated by MAP kinases.

The protein localises to the cytoplasm. It localises to the cytoskeleton. In terms of biological role, binds to actin and affects the structure of the cytoskeleton. At high concentrations, profilin prevents the polymerization of actin, whereas it enhances it at low concentrations. In Olea europaea (Common olive), this protein is Profilin-2.